The chain runs to 369 residues: tRNA pseudouridine synthase D (369 aa).

Asp-80 serves as the catalytic Nucleophile. One can recognise a TRUD domain in the interval 156 to 318 (GIPNWFGEQR…LKQERRALRL (163 aa)).

It belongs to the pseudouridine synthase TruD family.

The catalysed reaction is uridine(13) in tRNA = pseudouridine(13) in tRNA. In terms of biological role, responsible for synthesis of pseudouridine from uracil-13 in transfer RNAs. This chain is tRNA pseudouridine synthase D, found in Xanthomonas axonopodis pv. citri (strain 306).